An 83-amino-acid polypeptide reads, in one-letter code: Small ribosomal subunit protein uS17c (83 aa).

This sequence belongs to the universal ribosomal protein uS17 family. In terms of assembly, part of the 30S ribosomal subunit.

It localises to the plastid. Its subcellular location is the chloroplast. One of the primary rRNA binding proteins, it binds specifically to the 5'-end of 16S ribosomal RNA. The protein is Small ribosomal subunit protein uS17c (rps17) of Pyropia yezoensis (Susabi-nori).